Consider the following 490-residue polypeptide: MAETTSWIPVWFPLMVLGCFGLNWLVRKVNVWLYESSLGENRHYLPPGDLGWPFIGNMLSFLRAFKTSDPDSFTRTLIKRYGPKGIYKAHMFGNPSIIVTTSDTCRRVLTDDDAFKPGWPTSTMELIGRKSFVGISFEEHKRLRRLTAAPVNGHEALSTYIPYIEENVITVLDKWTKMGEFEFLTHLRKLTFRIIMYIFLSSESENVMDALEREYTALNYGVRAMAVNIPGFAYHRALKARKTLVAAFQSIVTERRNQRKQNILSNKKDMLDNLLNVKDEDGKTLDDEEIIDVLLMYLNAGHESSGHTIMWATVFLQEHPEVLQRAKAEQEMILKSRPEGQKGLSLKETRKMEFLSQVVDETLRVITFSLTAFREAKTDVEMNGYLIPKGWKVLTWFRDVHIDPEVFPDPRKFDPARWDNGFVPKAGAFLPFGAGSHLCPGNDLAKLEISIFLHHFLLKYQVKRSNPECPVMYLPHTRPTDNCLARISYQ.

A helical membrane pass occupies residues 6-26; the sequence is SWIPVWFPLMVLGCFGLNWLV. C439 serves as a coordination point for heme.

Belongs to the cytochrome P450 family. Heme is required as a cofactor. Widely expressed. Highly expressed in influorescence stem, influorescence, and silique tissue. Weakly expressed in cauline and rosette leaves. Expressed at a higher level in stem and influorescence than AtKAO2/CYP88A4.

It localises to the endoplasmic reticulum membrane. The catalysed reaction is ent-kaur-16-en-19-oate + 3 reduced [NADPH--hemoprotein reductase] + 3 O2 = gibberellin A12 + 3 oxidized [NADPH--hemoprotein reductase] + 4 H2O + 4 H(+). It catalyses the reaction ent-kaur-16-en-19-oate + reduced [NADPH--hemoprotein reductase] + O2 = ent-7alpha-hydroxykaur-16-en-19-oate + oxidized [NADPH--hemoprotein reductase] + H2O + H(+). The enzyme catalyses ent-7alpha-hydroxykaur-16-en-19-oate + reduced [NADPH--hemoprotein reductase] + O2 = gibberellin A12 aldehyde + oxidized [NADPH--hemoprotein reductase] + 2 H2O + H(+). It carries out the reaction gibberellin A12 aldehyde + reduced [NADPH--hemoprotein reductase] + O2 = gibberellin A12 + oxidized [NADPH--hemoprotein reductase] + H2O + 2 H(+). Its pathway is plant hormone biosynthesis; gibberellin biosynthesis. Catalyzes three successive oxidations of ent-kaurenoic acid giving gibberellin 12 (GA12), a key step in gibberellins (GAs) biosynthesis. GAs, which are involved many processes, including stem elongation, play a central role in plant development. In Arabidopsis thaliana (Mouse-ear cress), this protein is Ent-kaurenoic acid oxidase 1.